Consider the following 475-residue polypeptide: Sulfate adenylyltransferase subunit 1 (475 aa).

The region spanning 25–239 (KSLLRFLTCG…EVLETVEIQR (215 aa)) is the tr-type G domain. The G1 stretch occupies residues 34–41 (GSVDDGKS). 34–41 (GSVDDGKS) is a binding site for GTP. The segment at 92–96 (GITID) is G2. The interval 113 to 116 (DTPG) is G3. GTP contacts are provided by residues 113–117 (DTPGH) and 168–171 (NKMD). Residues 168–171 (NKMD) are G4. The segment at 206–208 (SAL) is G5.

Belongs to the TRAFAC class translation factor GTPase superfamily. Classic translation factor GTPase family. CysN/NodQ subfamily. Heterodimer composed of CysD, the smaller subunit, and CysN.

It carries out the reaction sulfate + ATP + H(+) = adenosine 5'-phosphosulfate + diphosphate. Its pathway is sulfur metabolism; hydrogen sulfide biosynthesis; sulfite from sulfate: step 1/3. In terms of biological role, with CysD forms the ATP sulfurylase (ATPS) that catalyzes the adenylation of sulfate producing adenosine 5'-phosphosulfate (APS) and diphosphate, the first enzymatic step in sulfur assimilation pathway. APS synthesis involves the formation of a high-energy phosphoric-sulfuric acid anhydride bond driven by GTP hydrolysis by CysN coupled to ATP hydrolysis by CysD. The chain is Sulfate adenylyltransferase subunit 1 from Shigella flexneri serotype 5b (strain 8401).